Consider the following 183-residue polypeptide: MNDVELVVLADEFGKPSGTAVKSEVHTTDTPLHFAFSCYVRNNKGDLLITRRALSKKTWPGVWTNSACGHLMPGETPEQAVARRVPHEIGISQDKLVNIACVLPDFSYRAVDSRGIVEWEICPVFTAAVTDDALLPEAEEVDSLVWVEPSKLIHAVHSAPFAFSPWMVEQLQHEALRTALTTS.

Mn(2+)-binding residues include His-26 and His-33. The Nudix hydrolase domain maps to Pro-31–Glu-169. Cys-68 is an active-site residue. Cys-68 contributes to the Mg(2+) binding site. A Mn(2+)-binding site is contributed by His-70. Glu-88 is a Mg(2+) binding site. Glu-118 and Glu-120 together coordinate Mn(2+). Residue Glu-120 is part of the active site.

This sequence belongs to the IPP isomerase type 1 family. Mg(2+) serves as cofactor. The cofactor is Mn(2+).

Its subcellular location is the cytoplasm. The enzyme catalyses isopentenyl diphosphate = dimethylallyl diphosphate. The protein operates within isoprenoid biosynthesis; dimethylallyl diphosphate biosynthesis; dimethylallyl diphosphate from isopentenyl diphosphate: step 1/1. Catalyzes the 1,3-allylic rearrangement of the homoallylic substrate isopentenyl (IPP) to its highly electrophilic allylic isomer, dimethylallyl diphosphate (DMAPP). This chain is Isopentenyl-diphosphate Delta-isomerase, found in Corynebacterium diphtheriae (strain ATCC 700971 / NCTC 13129 / Biotype gravis).